Consider the following 499-residue polypeptide: Sensor histidine kinase PdtaS (499 aa).

The interval 4–149 (LGDLLAEHTM…PLEGAYLDCA (146 aa)) is GAF. The segment at 178 to 289 (DGFIRLNEGG…TEVKRRDRAL (112 aa)) is PAS-like. One can recognise a Histidine kinase domain in the interval 298-493 (EIHHRVKNNL…DVVLRVPIGR (196 aa)). At His-301 the chain carries Phosphohistidine; by autocatalysis.

Autophosphorylated.

The protein localises to the cytoplasm. The catalysed reaction is ATP + protein L-histidine = ADP + protein N-phospho-L-histidine.. Functionally, member of the two-component regulatory system PdtaR/PdtaS. This two-component system plays an essential role in mycobacterial adaptation to poor nutrient conditions. Nutrient deprivation results in increasing intracellular concentrations of cyclic diguanosine monophosphate (c-di-GMP), which binds to the PdtaS sensor and promotes its autophosphorylation, leading to the activation of the signaling cascade. The phosphate group is then transferred to PdtaR. In Mycolicibacterium smegmatis (strain ATCC 700084 / mc(2)155) (Mycobacterium smegmatis), this protein is Sensor histidine kinase PdtaS.